The primary structure comprises 138 residues: Basic phospholipase A2 PL-X' (138 aa).

The first 16 residues, 1-16, serve as a signal peptide directing secretion; sequence MRTLWIMAVLLVGVEG. 7 disulfides stabilise this stretch: C42-C131, C44-C60, C59-C111, C65-C138, C66-C104, C73-C97, and C91-C102. Ca(2+) contacts are provided by Y43, G45, and G47. Residue H63 is part of the active site. D64 contacts Ca(2+). The active site involves D105.

It belongs to the phospholipase A2 family. Group II subfamily. D49 sub-subfamily. It depends on Ca(2+) as a cofactor. In terms of tissue distribution, expressed by the venom gland.

The protein resides in the secreted. It carries out the reaction a 1,2-diacyl-sn-glycero-3-phosphocholine + H2O = a 1-acyl-sn-glycero-3-phosphocholine + a fatty acid + H(+). PLA2 catalyzes the calcium-dependent hydrolysis of the 2-acyl groups in 3-sn-phosphoglycerides. This is Basic phospholipase A2 PL-X' from Protobothrops flavoviridis (Habu).